The chain runs to 320 residues: Ferrochelatase (320 aa).

Fe cation is bound by residues H194 and E275.

Belongs to the ferrochelatase family. In terms of assembly, monomer.

It localises to the cytoplasm. The enzyme catalyses heme b + 2 H(+) = protoporphyrin IX + Fe(2+). The protein operates within porphyrin-containing compound metabolism; protoheme biosynthesis; protoheme from protoporphyrin-IX: step 1/1. Catalyzes the ferrous insertion into protoporphyrin IX. The protein is Ferrochelatase of Escherichia coli O8 (strain IAI1).